The sequence spans 199 residues: Ribonuclease P protein subunit p25 (199 aa).

Positions 1–11 are enriched in basic and acidic residues; the sequence is MENFRKVRSEE. 2 disordered regions span residues 1-28 and 144-199; these read MENFRKVRSEEAPAGCGAEGGGPGSGPF and LDPR…DQTA. The segment covering 151–166 has biased composition (pro residues); the sequence is YQPPNPHPGPSSPPAA. Phosphoserine occurs at positions 172 and 182.

This sequence belongs to the histone-like Alba family. As to quaternary structure, component of nuclear RNase P and RNase MRP ribonucleoproteins. RNase P consists of a catalytic RNA moiety and 10 different protein chains; POP1, POP4, POP5, POP7, RPP14, RPP21, RPP25, RPP30, RPP38 and RPP40. Within the RNase P complex, POP1, POP7 and RPP25 form the 'finger' subcomplex, POP5, RPP14, RPP40 and homodimeric RPP30 form the 'palm' subcomplex, and RPP21, POP4 and RPP38 form the 'wrist' subcomplex. All subunits of the RNase P complex interact with the catalytic RNA. Several subunits of RNase P are also part of the RNase MRP complex. RNase MRP consists of a catalytic RNA moiety and about 8 protein subunits; POP1, POP7, RPP25, RPP30, RPP38, RPP40 and possibly also POP4 and POP5. POP7 forms a heterodimer with RPP25 that binds to the P3 stem loop of the catalytic RNA.

It is found in the nucleus. Its subcellular location is the nucleolus. Functionally, component of ribonuclease P, a ribonucleoprotein complex that generates mature tRNA molecules by cleaving their 5'-ends. Also a component of the MRP ribonuclease complex, which cleaves pre-rRNA sequences. The polypeptide is Ribonuclease P protein subunit p25 (RPP25) (Homo sapiens (Human)).